The following is a 259-amino-acid chain: UPF0758 protein Bphyt_3148 (259 aa).

The MPN domain occupies 137 to 259 (LLNSPEAVEN…VYSFARAGWP (123 aa)). Zn(2+)-binding residues include His-208, His-210, and Asp-221. The JAMM motif signature appears at 208-221 (HNHPSGAVQPSASD).

This sequence belongs to the UPF0758 family.

The protein is UPF0758 protein Bphyt_3148 of Paraburkholderia phytofirmans (strain DSM 17436 / LMG 22146 / PsJN) (Burkholderia phytofirmans).